Reading from the N-terminus, the 138-residue chain is Putative pre-16S rRNA nuclease (138 aa).

This sequence belongs to the YqgF nuclease family.

It localises to the cytoplasm. Its function is as follows. Could be a nuclease involved in processing of the 5'-end of pre-16S rRNA. The polypeptide is Putative pre-16S rRNA nuclease (Geobacillus sp. (strain WCH70)).